The chain runs to 224 residues: Transcription cofactor HES-6 (224 aa).

Residues 1–31 (MAPPAAPGRDRVGREDEDGWETRGDRKARKP) are disordered. Positions 8–25 (GRDRVGREDEDGWETRGD) are enriched in basic and acidic residues. The bHLH domain occupies 25 to 77 (DRKARKPLVEKKRRARINESLQELRLLLAGAEVQAKLENAEVLELTVRRVQGV). An Orange domain is found at 96 to 129 (FAAGYIQCMHEVHTFVSTCQAIDATVAAELLNHL). Residues 147–161 (DALAGPPRAPGRSGW) are compositionally biased toward low complexity. The disordered stretch occupies residues 147–205 (DALAGPPRAPGRSGWPAGGAPGSPIPSPPGPGDDLCSDLEEAPEAELSQAPAEGPDLVP). Positions 181–190 (LCSDLEEAPE) are enriched in acidic residues. The short motif at 221-224 (WRPW) is the WRPW motif element.

Transcription repression requires formation of a complex with a corepressor protein of the Groucho/TLE family. Interacts with HES1.

The protein resides in the nucleus. In terms of biological role, does not bind DNA itself but suppresses both HES1-mediated N box-dependent transcriptional repression and binding of HES1 to E box sequences. Also suppresses HES1-mediated inhibition of the heterodimer formed by ASCL1/MASH1 and TCF3/E47, allowing ASCL1 and TCF3 to up-regulate transcription in its presence. Promotes cell differentiation. The protein is Transcription cofactor HES-6 of Homo sapiens (Human).